The primary structure comprises 338 residues: tRNA N6-adenosine threonylcarbamoyltransferase (338 aa).

Positions 111 and 115 each coordinate Fe cation. Substrate-binding positions include 134-138 (LVSGG), Asp167, Gly180, and Asn272. Fe cation is bound at residue Asp300.

This sequence belongs to the KAE1 / TsaD family. The cofactor is Fe(2+).

Its subcellular location is the cytoplasm. It catalyses the reaction L-threonylcarbamoyladenylate + adenosine(37) in tRNA = N(6)-L-threonylcarbamoyladenosine(37) in tRNA + AMP + H(+). In terms of biological role, required for the formation of a threonylcarbamoyl group on adenosine at position 37 (t(6)A37) in tRNAs that read codons beginning with adenine. Is involved in the transfer of the threonylcarbamoyl moiety of threonylcarbamoyl-AMP (TC-AMP) to the N6 group of A37, together with TsaE and TsaB. TsaD likely plays a direct catalytic role in this reaction. The polypeptide is tRNA N6-adenosine threonylcarbamoyltransferase (Shewanella baltica (strain OS155 / ATCC BAA-1091)).